We begin with the raw amino-acid sequence, 425 residues long: Raffinose permease (425 aa).

The Cytoplasmic segment spans residues 1 to 11 (MNSASTHKNTD). A helical membrane pass occupies residues 12-32 (FWIFGLFFFLYFFIMATCFPF). Residues 33–48 (LPVWLSDVVGLSKTDT) are Periplasmic-facing. Residues 49 to 69 (GIVFSCLSLFAISFQPLLGVI) traverse the membrane as a helical segment. At 70-78 (SDRLGLKKN) the chain is on the cytoplasmic side. Residues 79-99 (LIWSISLLLVFFAPFFLYVFA) form a helical membrane-spanning segment. The Periplasmic portion of the chain corresponds to 100-105 (PLLHLN). The helical transmembrane segment at 106–126 (IWAGALTGGVFIGFVFSAGAG) threads the bilayer. Residues 127 to 147 (AIEAYIERVSRSSGFEYGKAR) are Cytoplasmic-facing. Residues 148 to 168 (MFGCLGWALCATMAGILFNVD) form a helical membrane-spanning segment. A topological domain (periplasmic) is located at residue proline 169. The chain crosses the membrane as a helical span at residues 170–190 (SLVFWMGSGGALLLLLLLYLA). Residues 191 to 229 (RPSTSQTAMVMNALGANSSLISTRMVFSLFRMRQMWMFV) are Cytoplasmic-facing. Residues 230-250 (LYTIGVACVYDVFDQQFAIFF) form a helical membrane-spanning segment. Over 251–265 (RSFFDTPQAGIKAFG) the chain is Periplasmic. A helical membrane pass occupies residues 266-286 (FATTAGEICNAIIMFCTPWII). At 287–294 (NRIGAKNT) the chain is on the cytoplasmic side. A helical transmembrane segment spans residues 295 to 315 (LLVAGGIMTIRITGSAFATTM). A topological domain (periplasmic) is located at residue threonine 316. The helical transmembrane segment at 317-337 (EVVILKMLHALEVPFLLVGAF) threads the bilayer. At 338-351 (KYITGVFDTRLSAT) the chain is on the cytoplasmic side. The chain crosses the membrane as a helical span at residues 352–372 (VYLIGFQFSKQLAAILLSTFA). Residues 373–383 (GHLYDRMGFQN) are Periplasmic-facing. The helical transmembrane segment at 384-404 (TYFVLGMIVLTVTVISAFTLS) threads the bilayer. Topologically, residues 405–425 (SSPGIVHPSVEKAPVAHSEIN) are cytoplasmic.

Belongs to the major facilitator superfamily. Oligosaccharide:H(+) symporter (OHS) (TC 2.A.1.5) family. In terms of assembly, monomer.

It localises to the cell inner membrane. Functionally, responsible for transport of raffinose into the cell. Can also transport lactose and melibiose. Has weak activity with maltose. In Escherichia coli, this protein is Raffinose permease.